The primary structure comprises 855 residues: Suppressor of tumorigenicity 14 protein homolog (855 aa).

At 1–55 (MGSNRGRKAGGGSQDFGAGLKYNSRLENMNGFEEGVEFLPANNAKKVEKRGPRRW) the chain is on the cytoplasmic side. The residue at position 13 (Ser-13) is a Phosphoserine. The helical; Signal-anchor for type II membrane protein transmembrane segment at 56-76 (VVLVAVLFSFLLLSLMAGLLV) threads the bilayer. The Extracellular portion of the chain corresponds to 77 to 855 (WHFHYRNVRV…RDWIKEHTGV (779 aa)). The region spanning 86–203 (VQKVFNGHLR…TSVVAFPIDP (118 aa)) is the SEA domain. A glycan (N-linked (GlcNAc...) asparagine) is linked at Asn-107. An intrachain disulfide couples Cys-214 to Cys-244. CUB domains are found at residues 214 to 331 (CSFA…EATF) and 340 to 444 (CGGF…LAEY). N-linked (GlcNAc...) asparagine glycosylation is found at Asn-302 and Asn-365. 2 cysteine pairs are disulfide-bonded: Cys-340-Cys-366 and Cys-397-Cys-410. Residue Asn-421 is glycosylated (N-linked (GlcNAc...) asparagine). LDL-receptor class A domains follow at residues 451–488 (DPCP…YCRC), 489–522 (NATH…DEEG), 523–561 (CSCP…SCDS), and 565–604 (VSCT…NCDC). Disulfide bonds link Cys-453-Cys-464, Cys-459-Cys-477, Cys-471-Cys-486, Cys-488-Cys-501, Cys-496-Cys-514, Cys-508-Cys-523, Cys-525-Cys-537, Cys-532-Cys-550, Cys-544-Cys-559, Cys-567-Cys-579, Cys-574-Cys-593, Cys-587-Cys-602, and Cys-641-Cys-657. A glycan (N-linked (GlcNAc...) asparagine) is linked at Asn-489. The Peptidase S1 domain occupies 615-854 (VVGGTNADEG…VRDWIKEHTG (240 aa)). Residues His-656 and Asp-711 each act as charge relay system in the active site. An N-linked (GlcNAc...) asparagine glycan is attached at Asn-772. Cystine bridges form between Cys-776/Cys-790 and Cys-801/Cys-830. The active-site Charge relay system is the Ser-805.

Belongs to the peptidase S1 family. Interacts with CDCP1. May interact with TMEFF1. In terms of tissue distribution, highly expressed in intestine, kidney, lung, and thymus. Not expressed in skeletal muscle, liver, heart, testis and brain.

The protein localises to the membrane. It catalyses the reaction Cleaves various synthetic substrates with Arg or Lys at the P1 position and prefers small side-chain amino acids, such as Ala and Gly, at the P2 position.. In terms of biological role, exhibits trypsin-like activity as defined by cleavage of synthetic substrates with Arg or Lys as the P1 site. Involved in the terminal differentiation of keratinocytes through prostasin (PRSS8) activation and filaggrin (FLG) processing. Proteolytically cleaves and therefore activates TMPRSS13. This Mus musculus (Mouse) protein is Suppressor of tumorigenicity 14 protein homolog (St14).